Consider the following 86-residue polypeptide: Centromere protein W (86 aa).

Belongs to the CENP-W/WIP1 family. Heterodimer with CENPT; this dimer coassembles with CENPS-CENPX heterodimers at centromeres to form the tetrameric CENP-T-W-S-X complex, which is a subcomplex of the large constitutive centromere-associated network (CCAN, also known as the interphase centromere complex or ICEN). Interacts with NPM1.

The protein resides in the nucleus. It is found in the chromosome. It localises to the centromere. Its subcellular location is the kinetochore. The protein localises to the nucleus matrix. The protein resides in the nucleolus. Component of the CENPA-NAC (nucleosome-associated) complex, a complex that plays a central role in assembly of kinetochore proteins, mitotic progression and chromosome segregation. The CENPA-NAC complex recruits the CENPA-CAD (nucleosome distal) complex and may be involved in incorporation of newly synthesized CENPA into centromeres. Part of a nucleosome-associated complex that binds specifically to histone H3-containing nucleosomes at the centromere, as opposed to nucleosomes containing CENPA. Component of the heterotetrameric CENP-T-W-S-X complex that binds and supercoils DNA, and plays an important role in kinetochore assembly. CENPW has a fundamental role in kinetochore assembly and function. It is one of the inner kinetochore proteins, with most further proteins binding downstream. Required for normal chromosome organization and normal progress through mitosis. This is Centromere protein W (Cenpw) from Rattus norvegicus (Rat).